Here is a 773-residue protein sequence, read N- to C-terminus: Immunoglobulin domain and leucine-rich repeat-containing protein 2 (773 aa).

An N-terminal signal peptide occupies residues 1–20 (MRKFVFFVVAILIQIHTTTS). At 21-493 (QRNRSSSPSG…DWYSYDVFNS (473 aa)) the chain is on the extracellular side. 6 LRR repeats span residues 52 to 73 (TRNI…KIYG), 74 to 96 (SNIQ…IFAP), 97 to 120 (FPQL…VIHP), 122 to 144 (LKVL…LLSI), 145 to 167 (FPKI…DTSN), and 168 to 191 (TKLK…TLRV). N-linked (GlcNAc...) asparagine glycosylation occurs at Asn-114. A glycan (N-linked (GlcNAc...) asparagine) is linked at Asn-204. LRR repeat units lie at residues 206 to 230 (STKL…DWKF), 233 to 251 (LRSL…QLDA), 252 to 275 (PLLN…ILTP), and 296 to 319 (PSTV…FIPM). In terms of domain architecture, Ig-like spans 349–479 (PVYAQTSIRK…GKDYGIYHFR (131 aa)). Residues Asn-361 and Asn-379 are each glycosylated (N-linked (GlcNAc...) asparagine). Residues Cys-396 and Cys-463 are joined by a disulfide bond. A helical membrane pass occupies residues 494–514 (VFWGGLATSLIVCLISFLLNI). Over 515–773 (TWILTRKSAL…RSPDSPPEKR (259 aa)) the chain is Cytoplasmic. The interval 725-773 (VRPGIIPTNAPSIRFTTKPTTSSISNEASTSSPSSSGAHRSPDSPPEKR) is disordered. Over residues 733–745 (NAPSIRFTTKPTT) the composition is skewed to polar residues. Low complexity predominate over residues 746–763 (SSISNEASTSSPSSSGAH). Over residues 764-773 (RSPDSPPEKR) the composition is skewed to basic and acidic residues.

The protein resides in the membrane. This is Immunoglobulin domain and leucine-rich repeat-containing protein 2 from Caenorhabditis elegans.